Consider the following 367-residue polypeptide: UDP-N-acetylglucosamine--N-acetylmuramyl-(pentapeptide) pyrophosphoryl-undecaprenol N-acetylglucosamine transferase (367 aa).

UDP-N-acetyl-alpha-D-glucosamine is bound by residues 15–17 (TGG), N127, R163, S191, I249, and Q294.

Belongs to the glycosyltransferase 28 family. MurG subfamily.

It is found in the cell inner membrane. The catalysed reaction is di-trans,octa-cis-undecaprenyl diphospho-N-acetyl-alpha-D-muramoyl-L-alanyl-D-glutamyl-meso-2,6-diaminopimeloyl-D-alanyl-D-alanine + UDP-N-acetyl-alpha-D-glucosamine = di-trans,octa-cis-undecaprenyl diphospho-[N-acetyl-alpha-D-glucosaminyl-(1-&gt;4)]-N-acetyl-alpha-D-muramoyl-L-alanyl-D-glutamyl-meso-2,6-diaminopimeloyl-D-alanyl-D-alanine + UDP + H(+). Its pathway is cell wall biogenesis; peptidoglycan biosynthesis. Functionally, cell wall formation. Catalyzes the transfer of a GlcNAc subunit on undecaprenyl-pyrophosphoryl-MurNAc-pentapeptide (lipid intermediate I) to form undecaprenyl-pyrophosphoryl-MurNAc-(pentapeptide)GlcNAc (lipid intermediate II). The polypeptide is UDP-N-acetylglucosamine--N-acetylmuramyl-(pentapeptide) pyrophosphoryl-undecaprenol N-acetylglucosamine transferase (Burkholderia orbicola (strain MC0-3)).